A 208-amino-acid chain; its full sequence is MNYTEFFTNRSTSEISKDLLGRTLSYNNGEEILSGTIVEAEAYVGVKDRAAHSYGGRRSPANEGLYRPGGSLYIYSQRQYFFFDVSCQEEGEPQGVLIRAIDPLTGIDTMIKNRSGKTGPLLTNGPGKMMQALGITSRKWDLVDLNDSPFDIDIDHKREIEEIVALPRVGINQSDPEWAQKKLRFIVSGNPYVSDIKKKDIKKNHGFI.

Belongs to the DNA glycosylase MPG family.

This chain is Putative 3-methyladenine DNA glycosylase, found in Lactobacillus johnsonii (strain CNCM I-12250 / La1 / NCC 533).